The primary structure comprises 470 residues: Glutamate--tRNA ligase 1 (470 aa).

The short motif at Pro8 to Gly18 is the 'HIGH' region element. Positions Lys250–Arg254 match the 'KMSKS' region motif. Lys253 contributes to the ATP binding site.

It belongs to the class-I aminoacyl-tRNA synthetase family. Glutamate--tRNA ligase type 1 subfamily. In terms of assembly, monomer.

The protein resides in the cytoplasm. It catalyses the reaction tRNA(Glu) + L-glutamate + ATP = L-glutamyl-tRNA(Glu) + AMP + diphosphate. Functionally, catalyzes the attachment of glutamate to tRNA(Glu) in a two-step reaction: glutamate is first activated by ATP to form Glu-AMP and then transferred to the acceptor end of tRNA(Glu). This is Glutamate--tRNA ligase 1 from Pseudothermotoga lettingae (strain ATCC BAA-301 / DSM 14385 / NBRC 107922 / TMO) (Thermotoga lettingae).